The chain runs to 92 residues: Dynein light chain 1, cytoplasmic (92 aa).

This sequence belongs to the dynein light chain family. As to quaternary structure, homodimer. Cytoplasmic dynein consists of two catalytic heavy chains (HCs) and a number of non-catalytic subunits which present intermediate chains (ICs), light intermediate chains (LICs) and light chains (LCs). Component of the nuclear pore complex (NPC). NPC constitutes the exclusive means of nucleocytoplasmic transport. NPCs allow the passive diffusion of ions and small molecules and the active, nuclear transport receptor-mediated bidirectional transport of macromolecules such as proteins, RNAs, ribonucleoparticles (RNPs), and ribosomal subunits across the nuclear envelope. Due to its 8-fold rotational symmetry, all subunits are present with 8 copies or multiples thereof. Part of the NUP82 subcomplex. In the complex, interacts directly with Nup159.

It localises to the cytoplasm. The protein resides in the cytoskeleton. The protein localises to the nucleus. It is found in the nuclear pore complex. In terms of biological role, acts as one of several non-catalytic accessory components of the cytoplasmic dynein complex that are thought to be involved in linking dynein to cargos and to adapter proteins that regulate dynein function. Cytoplasmic dynein 1 acts as a motor for the intracellular retrograde motility of vesicles and organelles along microtubules. May play a role in changing or maintaining the spatial distribution of cytoskeletal structures. Also a component of the nuclear pore complex where it may contribute to the stable association of the Nup82 subcomplex with the NPC. This Saccharomyces cerevisiae (strain ATCC 204508 / S288c) (Baker's yeast) protein is Dynein light chain 1, cytoplasmic (DYN2).